The chain runs to 941 residues: Isoleucine--tRNA ligase (941 aa).

The 'HIGH' region motif lies at 59-69 (PYANGNIHIGH). Glu562 contributes to the L-isoleucyl-5'-AMP binding site. A 'KMSKS' region motif is present at residues 603 to 607 (KMSKS). Lys606 provides a ligand contact to ATP. Positions 904, 907, 924, and 927 each coordinate Zn(2+).

Belongs to the class-I aminoacyl-tRNA synthetase family. IleS type 1 subfamily. As to quaternary structure, monomer. The cofactor is Zn(2+).

The protein localises to the cytoplasm. The catalysed reaction is tRNA(Ile) + L-isoleucine + ATP = L-isoleucyl-tRNA(Ile) + AMP + diphosphate. Catalyzes the attachment of isoleucine to tRNA(Ile). As IleRS can inadvertently accommodate and process structurally similar amino acids such as valine, to avoid such errors it has two additional distinct tRNA(Ile)-dependent editing activities. One activity is designated as 'pretransfer' editing and involves the hydrolysis of activated Val-AMP. The other activity is designated 'posttransfer' editing and involves deacylation of mischarged Val-tRNA(Ile). In Haemophilus influenzae (strain PittGG), this protein is Isoleucine--tRNA ligase.